Here is a 345-residue protein sequence, read N- to C-terminus: Eukaryotic translation initiation factor 3 subunit F (345 aa).

The MPN domain maps to 30 to 166 (VVIQPQAIFS…TRAYISAPVG (137 aa)). A disordered region spans residues 310–345 (EGASAEAGAQRGQRGGRGGRGGQQRTQERASEEVRA). Residues 312–321 (ASAEAGAQRG) show a composition bias toward low complexity. The segment covering 322 to 331 (QRGGRGGRGG) has biased composition (gly residues). Residues 335–345 (TQERASEEVRA) are compositionally biased toward basic and acidic residues.

The protein belongs to the eIF-3 subunit F family. Component of the eukaryotic translation initiation factor 3 (eIF-3) complex.

It localises to the cytoplasm. Functionally, component of the eukaryotic translation initiation factor 3 (eIF-3) complex, which is involved in protein synthesis of a specialized repertoire of mRNAs and, together with other initiation factors, stimulates binding of mRNA and methionyl-tRNAi to the 40S ribosome. The eIF-3 complex specifically targets and initiates translation of a subset of mRNAs involved in cell proliferation. In Neosartorya fischeri (strain ATCC 1020 / DSM 3700 / CBS 544.65 / FGSC A1164 / JCM 1740 / NRRL 181 / WB 181) (Aspergillus fischerianus), this protein is Eukaryotic translation initiation factor 3 subunit F.